Here is a 533-residue protein sequence, read N- to C-terminus: Calcium-dependent protein kinase 12 (533 aa).

Positions 1–77 (MGNCFTKTYE…RASGGGGEMG (77 aa)) are disordered. Gly-2 is lipidated: N-myristoyl glycine. The span at 26 to 38 (ERSKARGGDEPGT) shows a compositional bias: basic and acidic residues. The segment covering 57 to 69 (GSSSAAGALSRRA) has biased composition (low complexity). The region spanning 91–349 (YQLDRKLGSG…ASQALEHRWL (259 aa)) is the Protein kinase domain. ATP contacts are provided by residues 97 to 105 (LGSGQFGTT) and Lys-120. The active-site Proton acceptor is the Asp-215. An autoinhibitory domain region spans residues 354–384 (ASDRPIDSAVLSRMKQFKAMNKLKQLALKVI). EF-hand domains are found at residues 391–426 (EEIK…LGSR), 427–462 (ISEA…KHKL), 463–498 (EKEE…YGMG), and 499–533 (DEAN…GIQT). The Ca(2+) site is built by Asp-404, Asp-406, Ser-408, Thr-410, Glu-415, Asp-440, Asp-442, Ser-444, Ser-446, Glu-451, Asp-476, Asp-478, Ser-480, Tyr-482, Glu-487, Asp-511, Asp-513, Asp-515, Arg-517, and Glu-522.

This sequence belongs to the protein kinase superfamily. Ser/Thr protein kinase family. CDPK subfamily. In terms of tissue distribution, expressed in roots, leaf blades and developing seeds. Expressed in vascular tissues of roots and leaf blades. Expressed in the phloem tissue of the large vascular bundle in leaf blades.

It is found in the membrane. The enzyme catalyses L-seryl-[protein] + ATP = O-phospho-L-seryl-[protein] + ADP + H(+). The catalysed reaction is L-threonyl-[protein] + ATP = O-phospho-L-threonyl-[protein] + ADP + H(+). Its activity is regulated as follows. Activated by calcium. Autophosphorylation may play an important role in the regulation of the kinase activity. Functionally, may play a role in signal transduction pathways that involve calcium as a second messenger. Functions in signal transduction pathways that positively regulate responses to low-nitrogen. Functions in multiple signaling pathways, positively regulating salt tolerance and negatively modulating rice blast fungus resistance. May promote tolerance to salt stress by negatively regulating NADPH oxidase and positively regulating reactive oxygen species (ROS) scavengers. This Oryza sativa subsp. japonica (Rice) protein is Calcium-dependent protein kinase 12.